Here is a 146-residue protein sequence, read N- to C-terminus: Putative pre-16S rRNA nuclease (146 aa).

The protein belongs to the YqgF nuclease family.

It localises to the cytoplasm. In terms of biological role, could be a nuclease involved in processing of the 5'-end of pre-16S rRNA. The protein is Putative pre-16S rRNA nuclease of Pseudomonas syringae pv. syringae (strain B728a).